Here is a 119-residue protein sequence, read N- to C-terminus: MPFPVPDPFVWDTSFQVFYFKLDDQHRAIFETLFNSTNDNTPGNLQLFYIVTANHFEEEEGWMVSASYGGYDAHKKLHEEFLAKVRSFSAPVSKENLFYAKDWLVQHIKTIDFKYKQLL.

Fe cation-binding residues include His26, His55, Glu59, His74, His78, His107, and Asp112.

The protein belongs to the hemerythrin family.

Hemerythrin is a respiratory protein in blood cells of certain marine worms. The oxygen-binding site in each chain contains two iron atoms. In Sipunculus nudus (Sipunculan worm), this protein is Hemerythrin subunit B.